The following is a 246-amino-acid chain: Octanoyltransferase (246 aa).

The BPL/LPL catalytic domain maps to 30-227 (GRIGNTLLLL…QFGRVFGHQV (198 aa)). Residues 75-82 (RGGDVTYH), 155-157 (AIG), and 168-170 (GFA) contribute to the substrate site. Cys-186 acts as the Acyl-thioester intermediate in catalysis.

It belongs to the LipB family.

Its subcellular location is the cytoplasm. It catalyses the reaction octanoyl-[ACP] + L-lysyl-[protein] = N(6)-octanoyl-L-lysyl-[protein] + holo-[ACP] + H(+). The protein operates within protein modification; protein lipoylation via endogenous pathway; protein N(6)-(lipoyl)lysine from octanoyl-[acyl-carrier-protein]: step 1/2. Functionally, catalyzes the transfer of endogenously produced octanoic acid from octanoyl-acyl-carrier-protein onto the lipoyl domains of lipoate-dependent enzymes. Lipoyl-ACP can also act as a substrate although octanoyl-ACP is likely to be the physiological substrate. In Acidobacterium capsulatum (strain ATCC 51196 / DSM 11244 / BCRC 80197 / JCM 7670 / NBRC 15755 / NCIMB 13165 / 161), this protein is Octanoyltransferase.